Here is a 239-residue protein sequence, read N- to C-terminus: Adapter protein MecA (239 aa).

The segment covering 118 to 128 (EQRTKEKEAQG) has biased composition (basic and acidic residues). A disordered region spans residues 118–137 (EQRTKEKEAQGSKRQKSSAR).

It belongs to the MecA family. Homodimer.

In terms of biological role, enables the recognition and targeting of unfolded and aggregated proteins to the ClpC protease or to other proteins involved in proteolysis. This Staphylococcus aureus (strain JH1) protein is Adapter protein MecA.